The sequence spans 187 residues: Small ribosomal subunit protein uS5 (187 aa).

The S5 DRBM domain occupies 21–84 (MVDKLVHINR…ESAKRDMIFV (64 aa)).

This sequence belongs to the universal ribosomal protein uS5 family. In terms of assembly, part of the 30S ribosomal subunit. Contacts proteins S4 and S8.

With S4 and S12 plays an important role in translational accuracy. In terms of biological role, located at the back of the 30S subunit body where it stabilizes the conformation of the head with respect to the body. The chain is Small ribosomal subunit protein uS5 from Mesorhizobium japonicum (strain LMG 29417 / CECT 9101 / MAFF 303099) (Mesorhizobium loti (strain MAFF 303099)).